A 1407-amino-acid polypeptide reads, in one-letter code: DNA-directed RNA polymerase subunit beta' (1407 aa).

Residues C70, C72, C85, and C88 each contribute to the Zn(2+) site. Mg(2+) is bound by residues D460, D462, and D464. Positions 814, 888, 895, and 898 each coordinate Zn(2+).

Belongs to the RNA polymerase beta' chain family. The RNAP catalytic core consists of 2 alpha, 1 beta, 1 beta' and 1 omega subunit. When a sigma factor is associated with the core the holoenzyme is formed, which can initiate transcription. Mg(2+) serves as cofactor. Zn(2+) is required as a cofactor.

The enzyme catalyses RNA(n) + a ribonucleoside 5'-triphosphate = RNA(n+1) + diphosphate. DNA-dependent RNA polymerase catalyzes the transcription of DNA into RNA using the four ribonucleoside triphosphates as substrates. The protein is DNA-directed RNA polymerase subunit beta' of Cronobacter sakazakii (strain ATCC BAA-894) (Enterobacter sakazakii).